The chain runs to 769 residues: Serine protease HtrA-like (769 aa).

Basic residues predominate over residues 1-20 (MDIGKKHVIPKSQYRRKRRE). The interval 1 to 390 (MDIGKKHVIP…ATSKLNKGRA (390 aa)) is disordered. 2 stretches are compositionally biased toward basic and acidic residues: residues 21–64 (FFHN…ERFK) and 71–108 (LEQRNRDVNENKAEESKSNQDSKSAYNRDHYLTDDVSK). The span at 126 to 137 (YEQNSEATLSTK) shows a compositional bias: polar residues. Positions 138–186 (STDKVESTEMRKLSSDKNKVGHEEQHVLSKPSEHDKETRIDSESSRTDS) are enriched in basic and acidic residues. Positions 247 to 262 (QQSQNEQTKTYTYGDS) are enriched in polar residues. Composition is skewed to basic and acidic residues over residues 264-296 (QNDKSNHENDLSHHIPSISDDKDNVMRENHIVD) and 310-330 (KTDDDRKLDEKIHVEDKHKQN). A compositionally biased stretch (polar residues) spans 331–347 (ADSSETVGYQSQSTASH). Positions 348 to 364 (RSTEKRNISINDHDKLN) are enriched in basic and acidic residues. Residues 365-390 (GQKTNTKTSANNNQKKATSKLNKGRA) are compositionally biased toward polar residues. A helical transmembrane segment spans residues 410 to 430 (LVILMGIIILIVILNAIFNNV). Active-site charge relay system residues include H504, D534, and S619. The region spanning 680–733 (IASLNSFERQAVKLPGKVKNGVVVDQVDNNGLADQSGLKKGDVITELDGKLLED) is the PDZ domain.

The protein belongs to the peptidase S1C family.

It localises to the cell membrane. The sequence is that of Serine protease HtrA-like from Staphylococcus aureus (strain COL).